Reading from the N-terminus, the 241-residue chain is MHEEEIYTSLQWDIPTSEASQKCPSLSKCPGTWCIVTVISCVVCVGLLAASIFLGIKFSQVSSLVMEQRERLIRQDTALLNLTEWQRNHTLQLKSCQASLQRSLRSGSNCNPCPPNWIQNGKSCYYAFDRWETWNNSKKSCLKEGDSLLQIDSKEEMEFINLSIWKLKGGYEYWVGVFQDGPSGSWFWEDGSSPLSDLLPTDRQLSASQICGYLKDHTLISDNCSNWKYFICEKKAFGSCI.

Over 1 to 34 the chain is Cytoplasmic; the sequence is MHEEEIYTSLQWDIPTSEASQKCPSLSKCPGTWC. The ITAM-like motif lies at 5–10; that stretch reads EIYTSL. Residues 35-55 form a helical; Signal-anchor for type II membrane protein membrane-spanning segment; the sequence is IVTVISCVVCVGLLAASIFLG. The Extracellular portion of the chain corresponds to 56–241; the sequence is IKFSQVSSLV…CEKKAFGSCI (186 aa). N-linked (GlcNAc...) asparagine glycans are attached at residues Asn81 and Asn88. Cys113 and Cys124 are oxidised to a cystine. Residues 120–233 form the C-type lectin domain; sequence NGKSCYYAFD…CSNWKYFICE (114 aa). 3 N-linked (GlcNAc...) asparagine glycosylation sites follow: Asn135, Asn161, and Asn223. 2 disulfide bridges follow: Cys141-Cys232 and Cys211-Cys224.

Homodimer. N-glycosylated. As to expression, high expression in the spleen, moderate to low levels in several other tissues and cell types, but no detectable expression in skin dendritic cells or CD4(+) T-cells.

It localises to the membrane. In terms of biological role, functions as an endocytic receptor on a small subset of myeloid cells specialized for the uptake and processing of material from dead cells. Recognizes filamentous form of actin in association with particular actin-binding domains of cytoskeletal proteins, including spectrin, exposed when cell membranes are damaged, and mediate the cross-presentation of dead-cell associated antigens in a Syk-dependent manner. In Rattus norvegicus (Rat), this protein is C-type lectin domain family 9 member A (Clec9a).